The following is a 249-amino-acid chain: tRNA pseudouridine synthase A (249 aa).

Asp54 acts as the Nucleophile in catalysis. Residue Tyr111 coordinates substrate.

This sequence belongs to the tRNA pseudouridine synthase TruA family. As to quaternary structure, homodimer.

The catalysed reaction is uridine(38/39/40) in tRNA = pseudouridine(38/39/40) in tRNA. Its function is as follows. Formation of pseudouridine at positions 38, 39 and 40 in the anticodon stem and loop of transfer RNAs. The sequence is that of tRNA pseudouridine synthase A from Mycoplasma capricolum subsp. capricolum (strain California kid / ATCC 27343 / NCTC 10154).